A 311-amino-acid polypeptide reads, in one-letter code: tRNA pseudouridine synthase B (311 aa).

The active-site Nucleophile is aspartate 52.

The protein belongs to the pseudouridine synthase TruB family. Type 1 subfamily.

It carries out the reaction uridine(55) in tRNA = pseudouridine(55) in tRNA. In terms of biological role, responsible for synthesis of pseudouridine from uracil-55 in the psi GC loop of transfer RNAs. The sequence is that of tRNA pseudouridine synthase B from Burkholderia mallei (strain ATCC 23344).